A 90-amino-acid polypeptide reads, in one-letter code: ATP synthase subunit c (90 aa).

The next 2 membrane-spanning stretches (helical) occupy residues 4-24 (FVYS…GCGI) and 53-73 (IGLA…LILI).

It belongs to the ATPase C chain family. F-type ATPases have 2 components, F(1) - the catalytic core - and F(0) - the membrane proton channel. F(1) has five subunits: alpha(3), beta(3), gamma(1), delta(1), epsilon(1). F(0) has three main subunits: a(1), b(2) and c(10-14). The alpha and beta chains form an alternating ring which encloses part of the gamma chain. F(1) is attached to F(0) by a central stalk formed by the gamma and epsilon chains, while a peripheral stalk is formed by the delta and b chains.

It localises to the cell inner membrane. Its function is as follows. F(1)F(0) ATP synthase produces ATP from ADP in the presence of a proton or sodium gradient. F-type ATPases consist of two structural domains, F(1) containing the extramembraneous catalytic core and F(0) containing the membrane proton channel, linked together by a central stalk and a peripheral stalk. During catalysis, ATP synthesis in the catalytic domain of F(1) is coupled via a rotary mechanism of the central stalk subunits to proton translocation. In terms of biological role, key component of the F(0) channel; it plays a direct role in translocation across the membrane. A homomeric c-ring of between 10-14 subunits forms the central stalk rotor element with the F(1) delta and epsilon subunits. The protein is ATP synthase subunit c of Syntrophobacter fumaroxidans (strain DSM 10017 / MPOB).